Reading from the N-terminus, the 609-residue chain is MSRVIGIDLGTTNSCVAVMEGGEPVVIANAEGNRTTPSVVAFKNGERIVGEAAKRQAITNPDNTVISIKRHMGSAHKETLEGNQYTPEQISAMILQKLKADAEAYLGQSVTQAVITVPAYFNDSQRQATKDAGKIAGLEVLRIVNEPTAAALAYGMEKTEDQTVLVFDLGGGTFDVSILELSDGFFEVKATSGDNKLGGDDFDDVVMNYLVSEFKKEHGIDLSKDRMAQQRLKDAAEKAKKDLSGVLTTTISLPFITADATGPKHLEMNLTRAKFEELSAELVERTMGPTRQALKDAGLTPSELDRVILVGGSTRIPAVQEAIKKFTGKEPHKGVNPDEVVALGAAVQAGVLTGDVKDVVLLDVTPLSLGIETLGGVFTKLIDRNTTIPTSKSQVFSTAADNQTSVEIHVLQGERQMAGDNKSLGRFNLSDIPPAPRGIPQIEVSFDIDANGIVNVRAKDLGTGKEQRITITSNSGLSDDDIDRMVKDAELNAEADKQRKEQVEVRNEADQLVFTTEKTLKEVEGKIDQAEIDRANAAKDKVKAALEGSNFEEIKTAKDELSEIIQQISVKLYEQAAQAQAAQGGGAEGQEPKKDNVVDADYEVVDDKK.

The residue at position 173 (Thr173) is a Phosphothreonine; by autocatalysis. The tract at residues 580–609 is disordered; the sequence is QAAQGGGAEGQEPKKDNVVDADYEVVDDKK. Positions 598–609 are enriched in acidic residues; it reads VDADYEVVDDKK.

The protein belongs to the heat shock protein 70 family.

Functionally, acts as a chaperone. This Brevibacillus brevis (strain 47 / JCM 6285 / NBRC 100599) protein is Chaperone protein DnaK.